The primary structure comprises 119 residues: Large ribosomal subunit protein bL17 (119 aa).

It belongs to the bacterial ribosomal protein bL17 family. As to quaternary structure, part of the 50S ribosomal subunit. Contacts protein L32.

In Malacoplasma penetrans (strain HF-2) (Mycoplasma penetrans), this protein is Large ribosomal subunit protein bL17.